The following is a 97-amino-acid chain: DNA-directed RNA polymerase subunit omega (97 aa).

Belongs to the RNA polymerase subunit omega family. As to quaternary structure, the RNAP catalytic core consists of 2 alpha, 1 beta, 1 beta' and 1 omega subunit. When a sigma factor is associated with the core the holoenzyme is formed, which can initiate transcription.

The enzyme catalyses RNA(n) + a ribonucleoside 5'-triphosphate = RNA(n+1) + diphosphate. Promotes RNA polymerase assembly. Latches the N- and C-terminal regions of the beta' subunit thereby facilitating its interaction with the beta and alpha subunits. In Corynebacterium glutamicum (strain ATCC 13032 / DSM 20300 / JCM 1318 / BCRC 11384 / CCUG 27702 / LMG 3730 / NBRC 12168 / NCIMB 10025 / NRRL B-2784 / 534), this protein is DNA-directed RNA polymerase subunit omega.